The following is a 295-amino-acid chain: Glycine--tRNA ligase alpha subunit (295 aa).

Belongs to the class-II aminoacyl-tRNA synthetase family. As to quaternary structure, tetramer of two alpha and two beta subunits.

It localises to the cytoplasm. It catalyses the reaction tRNA(Gly) + glycine + ATP = glycyl-tRNA(Gly) + AMP + diphosphate. In Desulforamulus reducens (strain ATCC BAA-1160 / DSM 100696 / MI-1) (Desulfotomaculum reducens), this protein is Glycine--tRNA ligase alpha subunit.